Reading from the N-terminus, the 153-residue chain is Interleukin-2 (153 aa).

The signal sequence occupies residues 1 to 20; that stretch reads MYRMQLLSCIALSLALVTNS. An O-linked (GalNAc...) threonine glycan is attached at T23. C78 and C125 are disulfide-bonded.

It belongs to the IL-2 family.

The protein resides in the secreted. Functionally, cytokine produced by activated CD4-positive helper T-cells and to a lesser extend activated CD8-positive T-cells and natural killer (NK) cells that plays pivotal roles in the immune response and tolerance. Binds to a receptor complex composed of either the high-affinity trimeric IL-2R (IL2RA/CD25, IL2RB/CD122 and IL2RG/CD132) or the low-affinity dimeric IL-2R (IL2RB and IL2RG). Interaction with the receptor leads to oligomerization and conformation changes in the IL-2R subunits resulting in downstream signaling starting with phosphorylation of JAK1 and JAK3. In turn, JAK1 and JAK3 phosphorylate the receptor to form a docking site leading to the phosphorylation of several substrates including STAT5. This process leads to activation of several pathways including STAT, phosphoinositide-3-kinase/PI3K and mitogen-activated protein kinase/MAPK pathways. Functions as a T-cell growth factor and can increase NK-cell cytolytic activity as well. Promotes strong proliferation of activated B-cells and subsequently immunoglobulin production. Plays a pivotal role in regulating the adaptive immune system by controlling the survival and proliferation of regulatory T-cells, which are required for the maintenance of immune tolerance. Moreover, participates in the differentiation and homeostasis of effector T-cell subsets, including Th1, Th2, Th17 as well as memory CD8-positive T-cells. The polypeptide is Interleukin-2 (IL2) (Homo sapiens (Human)).